Reading from the N-terminus, the 501-residue chain is G protein-activated inward rectifier potassium channel 1 (501 aa).

The disordered stretch occupies residues 1-40; that stretch reads MSALRRKFGDDYQVVTTSSSGSGLQPQGPGQGPQQQLVPK. The Cytoplasmic segment spans residues 1-80; it reads MSALRRKFGD…LFTTLVDLKW (80 aa). Over residues 18 to 37 the composition is skewed to low complexity; sequence SSSGSGLQPQGPGQGPQQQL. A helical transmembrane segment spans residues 81–105; sequence RWNLFIFILTYTVAWLFMASMWWVI. Over 106 to 129 the chain is Extracellular; it reads AYTRGDLNKAHVGNYTPCVANVYN. N119 carries an N-linked (GlcNAc...) asparagine glycan. The segment at residues 130 to 141 is an intramembrane region (helical; Pore-forming); the sequence is FPSAFLFFIETE. The segment at residues 142 to 148 is an intramembrane region (pore-forming); that stretch reads ATIGYGY. Positions 143–148 match the Selectivity filter motif; sequence TIGYGY. Residues 149 to 157 lie on the Extracellular side of the membrane; the sequence is RYITDKCPE. Residues 158 to 179 traverse the membrane as a helical segment; the sequence is GIILFLFQSILGSIVDAFLIGC. Residues 180 to 501 are Cytoplasmic-facing; the sequence is MFIKMSQPKK…LRKMNSDRFT (322 aa). Positions 182–209 are polyphosphoinositide (PIP2)-binding; sequence IKMSQPKKRAETLMFSEHAVISMRDGKL. Phosphoserine occurs at positions 385 and 424.

It belongs to the inward rectifier-type potassium channel (TC 1.A.2.1) family. KCNJ3 subfamily. In terms of assembly, associates with KCNJ5/GIRK4 or KCNJ6/GIRK2 or KCNJ9/GIRK3 to form a G-protein activated heteromultimer pore-forming unit. The resulting inward current is much larger.

The protein localises to the membrane. The enzyme catalyses K(+)(in) = K(+)(out). Heteromultimer composed of KCNJ3/GIRK1 and KCNJ5/GIRK4 is activated by phosphatidylinositol 4,5 biphosphate (PtdIns(4,5)P2). Functionally, inward rectifier potassium channels are characterized by a greater tendency to allow potassium to flow into the cell rather than out of it. Their voltage dependence is regulated by the concentration of extracellular potassium; as external potassium is raised, the voltage range of the channel opening shifts to more positive voltages. The inward rectification is mainly due to the blockage of outward current by internal magnesium. This potassium channel is controlled by G proteins. This receptor plays a crucial role in regulating the heartbeat. This is G protein-activated inward rectifier potassium channel 1 (KCNJ3) from Bos taurus (Bovine).